The primary structure comprises 673 residues: UvrABC system protein B (673 aa).

In terms of domain architecture, Helicase ATP-binding spans E26–R183. An ATP-binding site is contributed by G39 to T46. The Beta-hairpin signature appears at Y92–V115. The region spanning Q431 to L597 is the Helicase C-terminal domain. One can recognise a UVR domain in the interval Q633 to L668.

Belongs to the UvrB family. Forms a heterotetramer with UvrA during the search for lesions. Interacts with UvrC in an incision complex.

It localises to the cytoplasm. The UvrABC repair system catalyzes the recognition and processing of DNA lesions. A damage recognition complex composed of 2 UvrA and 2 UvrB subunits scans DNA for abnormalities. Upon binding of the UvrA(2)B(2) complex to a putative damaged site, the DNA wraps around one UvrB monomer. DNA wrap is dependent on ATP binding by UvrB and probably causes local melting of the DNA helix, facilitating insertion of UvrB beta-hairpin between the DNA strands. Then UvrB probes one DNA strand for the presence of a lesion. If a lesion is found the UvrA subunits dissociate and the UvrB-DNA preincision complex is formed. This complex is subsequently bound by UvrC and the second UvrB is released. If no lesion is found, the DNA wraps around the other UvrB subunit that will check the other stand for damage. The sequence is that of UvrABC system protein B from Enterobacter sp. (strain 638).